The sequence spans 141 residues: Hemoglobin subunit alpha (141 aa).

Positions 1–141 (VLSPADKSNV…VSTVLTSKYR (141 aa)) constitute a Globin domain. A Phosphoserine modification is found at Ser-3. N6-succinyllysine is present on residues Lys-7 and Lys-11. Position 16 is an N6-acetyllysine; alternate (Lys-16). An N6-succinyllysine; alternate modification is found at Lys-16. Tyr-24 carries the phosphotyrosine modification. The residue at position 35 (Ser-35) is a Phosphoserine. Residue Lys-40 is modified to N6-succinyllysine. Ser-49 is modified (phosphoserine). Residue His-58 participates in O2 binding. His-87 lines the heme b pocket. Ser-102 is subject to Phosphoserine. Residue Thr-108 is modified to Phosphothreonine. A phosphoserine mark is found at Ser-124 and Ser-131. Thr-134 and Thr-137 each carry phosphothreonine. Ser-138 is subject to Phosphoserine.

The protein belongs to the globin family. In terms of assembly, heterotetramer of two alpha chains and two beta chains. In terms of tissue distribution, red blood cells.

Functionally, involved in oxygen transport from the lung to the various peripheral tissues. Hemopressin acts as an antagonist peptide of the cannabinoid receptor CNR1. Hemopressin-binding efficiently blocks cannabinoid receptor CNR1 and subsequent signaling. The polypeptide is Hemoglobin subunit alpha (HBA) (Mico argentatus (Silvery marmoset)).